We begin with the raw amino-acid sequence, 367 residues long: Alanine racemase (367 aa).

Lysine 40 functions as the Proton acceptor; specific for D-alanine in the catalytic mechanism. Lysine 40 is modified (N6-(pyridoxal phosphate)lysine). Arginine 136 lines the substrate pocket. Catalysis depends on tyrosine 263, which acts as the Proton acceptor; specific for L-alanine. Methionine 310 contacts substrate.

The protein belongs to the alanine racemase family. Requires pyridoxal 5'-phosphate as cofactor.

It catalyses the reaction L-alanine = D-alanine. The protein operates within amino-acid biosynthesis; D-alanine biosynthesis; D-alanine from L-alanine: step 1/1. Catalyzes the interconversion of L-alanine and D-alanine. May also act on other amino acids. In Streptococcus thermophilus (strain ATCC BAA-491 / LMD-9), this protein is Alanine racemase (alr).